Consider the following 417-residue polypeptide: NADH-quinone oxidoreductase subunit D (417 aa).

This sequence belongs to the complex I 49 kDa subunit family. In terms of assembly, NDH-1 is composed of 14 different subunits. Subunits NuoB, C, D, E, F, and G constitute the peripheral sector of the complex.

It localises to the cell inner membrane. It catalyses the reaction a quinone + NADH + 5 H(+)(in) = a quinol + NAD(+) + 4 H(+)(out). In terms of biological role, NDH-1 shuttles electrons from NADH, via FMN and iron-sulfur (Fe-S) centers, to quinones in the respiratory chain. The immediate electron acceptor for the enzyme in this species is believed to be ubiquinone. Couples the redox reaction to proton translocation (for every two electrons transferred, four hydrogen ions are translocated across the cytoplasmic membrane), and thus conserves the redox energy in a proton gradient. This is NADH-quinone oxidoreductase subunit D from Verminephrobacter eiseniae (strain EF01-2).